We begin with the raw amino-acid sequence, 133 residues long: Small ribosomal subunit protein uS8 (133 aa).

This sequence belongs to the universal ribosomal protein uS8 family. Part of the 30S ribosomal subunit. Contacts proteins S5 and S12.

One of the primary rRNA binding proteins, it binds directly to 16S rRNA central domain where it helps coordinate assembly of the platform of the 30S subunit. The polypeptide is Small ribosomal subunit protein uS8 (Syntrophus aciditrophicus (strain SB)).